The following is a 464-amino-acid chain: MPSLPLLLLLWAASSYSFPVFHNGDRQNVETVWKYLENYYNLGKNMQAKNVNGKEMMAEKLRQMQQLFGLKVTGNSDPETLRAMKKPRCGVPDVAPYAITHNNPRWTKTHLTYSILNYTPYLPKAVVEDAIARAFRVWSDVTPLTFQRVFEEEGDIVLSFHRGDHGDNNPFDGPNYKLAHTFQPGPGLGGDVHYDLDETWTNSSENFNLFYVTAHELGHSLGLTHSSDIGALMFPSYTWYTEDFVLNQDDINRIQDLYGPSPNPIQPTGATTPHPCNGDLTFDAITTFRGEVFFFKGRFYIRVNRFMPEPELNLIGILWPNLPVKLDAAYEASMIDQVRYFKGSKVWAVQEQSVLRGFPRDIHSFFGFPSNVTHIDAAVCEEETGKTYFFVDHMYWRYDENTQSMDPGYPRLTAEDFPGIDDKVDDVFQKGENFYFFHQSVQHRFNLQIRRVDDSRDSSTWFNC.

Positions 1-17 (MPSLPLLLLLWAASSYS) are cleaved as a signal peptide. Positions 18–96 (FPVFHNGDRQ…PRCGVPDVAP (79 aa)) are cleaved as a propeptide — activation peptide. The short motif at 87-94 (PRCGVPDV) is the Cysteine switch element. Cys89 provides a ligand contact to Zn(2+). Positions 95–274 (APYAITHNNP…IQPTGATTPH (180 aa)) are metalloprotease. Position 155 (Asp155) interacts with Ca(2+). Residues His165 and Asp167 each contribute to the Zn(2+) site. Residues Asp172 and Gly173 each contribute to the Ca(2+) site. His180 serves as a coordination point for Zn(2+). Gly187, Gly189, and Asp191 together coordinate Ca(2+). His193 contributes to the Zn(2+) binding site. Ca(2+) is bound by residues Asp195 and Glu198. N-linked (GlcNAc...) asparagine glycosylation is present at Asn202. His215 lines the Zn(2+) pocket. Residue Glu216 is part of the active site. Residues His219 and His225 each contribute to the Zn(2+) site. Hemopexin repeat units lie at residues 273 to 322 (PHPC…WPNL) and 323 to 369 (PVKL…FGFP). Cys276 and Cys464 are joined by a disulfide. Asp283 serves as a coordination point for Ca(2+). Asn371 carries an N-linked (GlcNAc...) asparagine glycan. Hemopexin repeat units lie at residues 372–420 (VTHI…FPGI) and 421–464 (DDKV…WFNC). Ca(2+) contacts are provided by Asp376 and Asp425.

Belongs to the peptidase M10A family. Ca(2+) serves as cofactor. The cofactor is Zn(2+).

The protein localises to the secreted. It localises to the extracellular space. The protein resides in the extracellular matrix. It carries out the reaction Cleavage of the triple helix of collagen at about three-quarters of the length of the molecule from the N-terminus, at 775-Gly-|-Ile-776 in the alpha1(I) chain. Cleaves synthetic substrates and alpha-macroglobulins at bonds where P1' is a hydrophobic residue.. Can be activated without removal of the activation peptide. Cleaves collagens of types I, II, and III at one site in the helical domain. Also cleaves collagens of types VII and X. Able to degrade synthetic peptides and type I and II fibrillar collagen. This Mus musculus (Mouse) protein is Interstitial collagenase A (Mmp1a).